The chain runs to 86 residues: Small ribosomal subunit protein bS20 (86 aa).

The disordered stretch occupies residues methionine 1–methionine 27.

The protein belongs to the bacterial ribosomal protein bS20 family.

Functionally, binds directly to 16S ribosomal RNA. The polypeptide is Small ribosomal subunit protein bS20 (Vibrio cholerae serotype O1 (strain ATCC 39541 / Classical Ogawa 395 / O395)).